We begin with the raw amino-acid sequence, 229 residues long: C-&gt;U-editing enzyme APOBEC-1 (229 aa).

One can recognise a CMP/dCMP-type deaminase domain in the interval 10–134 (VDPTLRRRIE…QRNRQGLRDL (125 aa)). H61 is a Zn(2+) binding site. E63 (proton donor) is an active-site residue. Zn(2+) is bound by residues C93 and C96.

It belongs to the cytidine and deoxycytidylate deaminase family. Homodimer. Interacts with A1CF; form an mRNA editing complex. Interacts with RBM47; form an mRNA editing complex. Found in a complex with CELF2/CUGBP2 and A1CF. Interacts with HNRPAB. Interacts with SYNCRIP. Zn(2+) serves as cofactor. In terms of tissue distribution, expressed in the spleen. Expressed at lower level in the kidney, testis, lung, brain and liver.

It is found in the cytoplasm. The protein localises to the nucleus. It catalyses the reaction a cytidine in mRNA + H2O + H(+) = a uridine in mRNA + NH4(+). The enzyme catalyses cytidine(6666) in apoB mRNA + H2O + H(+) = uridine(6666) in apoB mRNA + NH4(+). Functionally, cytidine deaminase catalyzing the cytidine to uridine postranscriptional editing of a variety of mRNAs. Form complexes with cofactors that confer differential editing activity and selectivity. Responsible for the postranscriptional editing of a CAA codon for Gln to a UAA codon for stop in the apolipoprotein B mRNA. Also involved in CGA (Arg) to UGA (Stop) editing in the NF1 mRNA. May also play a role in the epigenetic regulation of gene expression by participating in DNA demethylation. The polypeptide is C-&gt;U-editing enzyme APOBEC-1 (Mus musculus (Mouse)).